The chain runs to 612 residues: Dihydroxy-acid dehydratase (612 aa).

Aspartate 81 lines the Mg(2+) pocket. Cysteine 122 lines the [2Fe-2S] cluster pocket. Mg(2+) contacts are provided by aspartate 123 and lysine 124. An N6-carboxylysine modification is found at lysine 124. Cysteine 195 serves as a coordination point for [2Fe-2S] cluster. Glutamate 491 provides a ligand contact to Mg(2+). The active-site Proton acceptor is the serine 517.

Belongs to the IlvD/Edd family. In terms of assembly, homodimer. It depends on [2Fe-2S] cluster as a cofactor. Mg(2+) is required as a cofactor.

It carries out the reaction (2R)-2,3-dihydroxy-3-methylbutanoate = 3-methyl-2-oxobutanoate + H2O. It catalyses the reaction (2R,3R)-2,3-dihydroxy-3-methylpentanoate = (S)-3-methyl-2-oxopentanoate + H2O. It participates in amino-acid biosynthesis; L-isoleucine biosynthesis; L-isoleucine from 2-oxobutanoate: step 3/4. The protein operates within amino-acid biosynthesis; L-valine biosynthesis; L-valine from pyruvate: step 3/4. Functions in the biosynthesis of branched-chain amino acids. Catalyzes the dehydration of (2R,3R)-2,3-dihydroxy-3-methylpentanoate (2,3-dihydroxy-3-methylvalerate) into 2-oxo-3-methylpentanoate (2-oxo-3-methylvalerate) and of (2R)-2,3-dihydroxy-3-methylbutanoate (2,3-dihydroxyisovalerate) into 2-oxo-3-methylbutanoate (2-oxoisovalerate), the penultimate precursor to L-isoleucine and L-valine, respectively. This is Dihydroxy-acid dehydratase from Rhizobium etli (strain ATCC 51251 / DSM 11541 / JCM 21823 / NBRC 15573 / CFN 42).